Reading from the N-terminus, the 269-residue chain is tRNA-cytidine(32) 2-sulfurtransferase (269 aa).

The short motif at 53–58 (SGGKDS) is the PP-loop motif element. 3 residues coordinate [4Fe-4S] cluster: C128, C131, and C218.

It belongs to the TtcA family. As to quaternary structure, homodimer. Mg(2+) is required as a cofactor. Requires [4Fe-4S] cluster as cofactor.

It is found in the cytoplasm. The catalysed reaction is cytidine(32) in tRNA + S-sulfanyl-L-cysteinyl-[cysteine desulfurase] + AH2 + ATP = 2-thiocytidine(32) in tRNA + L-cysteinyl-[cysteine desulfurase] + A + AMP + diphosphate + H(+). Its pathway is tRNA modification. Functionally, catalyzes the ATP-dependent 2-thiolation of cytidine in position 32 of tRNA, to form 2-thiocytidine (s(2)C32). The sulfur atoms are provided by the cysteine/cysteine desulfurase (IscS) system. The chain is tRNA-cytidine(32) 2-sulfurtransferase from Pelobacter propionicus (strain DSM 2379 / NBRC 103807 / OttBd1).